Here is a 385-residue protein sequence, read N- to C-terminus: WD repeat-containing protein RUP1 (385 aa).

WD repeat units lie at residues 69–108, 119–160, 163–205, 210–250, 254–292, 298–337, and 348–385; these read TGSDAIGAIEFDPTGEIIATGGIARKIRSYRLSSLLESRD, CTPA…PVSE, EHGG…TLEE, GGGA…DPLI, GHTKTVTYARFMDSHTIVTGSTDGSLKQWDIDNGRRVVR, VNSRNFVGLSVWRHGGLVVSGSENNQVFVYDKRWEEPVWV, and SDRRFVSSVCLRQVDEDWCTLVAGGSDGALEIFSGKQS.

In terms of assembly, interacts with UVR8. Interacts directly with DHU1.

Its subcellular location is the nucleus. The protein resides in the cytoplasm. It is found in the cytosol. Functionally, functions in association with RUP2 as repressor of UV-B-induced photomorphogenesis mediated by UVR8 and HY5, likely in coordination with DHU1. Plays a crucial negative feedback regulatory role downstream of UVR8-COP1 to inhibit UVR8 function, balance UV-B-specific responses and ensure normal plant growth. Is involved in the regulation of photoperiodic flowering and vegetative development. The chain is WD repeat-containing protein RUP1 from Arabidopsis thaliana (Mouse-ear cress).